The sequence spans 382 residues: F-box/kelch-repeat protein KIB1 (382 aa).

The F-box domain maps to 22–69 (SKHSILAVDLVRLILERLSFVDFHRARCVSSIWYIASKTVIGVTNPTT). Kelch repeat units lie at residues 73–117 (ILFP…ASSG), 159–209 (VLWV…FKEN), and 259–306 (IVAK…ITVE).

As to quaternary structure, part of a SCF (SKP1-cullin-F-box) protein ligase complex. Binds directly to several GSK3 family proteins such as SKP1A/ASK1, ASK1/SK11, ASK3/SK12, ASK5/SK13, ASK7/BIN2/SK21, ASK9/SK22 and ASK6/SK23. Interacts with ASK7/BIN2/SK21 in a brassinosteroid (BR)-dependent manner. Expressed in seedlings, leaves, stems, flower buds and flowers.

The protein localises to the cytoplasm. It localises to the nucleus. The protein resides in the nucleolus. Functionally, component of SCF(ASK-cullin-F-box) E3 ubiquitin ligase complexes, which may mediate the ubiquitination and subsequent proteasomal degradation of target proteins. Required for brassinosteroid (BR) signal transduction. Mediates ASK7/BIN2/SK21 inactivation both by competing with substrate binding (e.g. BZR1) and by promoting its ubiquitination and subsequent proteasomal degradation. In Arabidopsis thaliana (Mouse-ear cress), this protein is F-box/kelch-repeat protein KIB1.